A 76-amino-acid chain; its full sequence is Sec-independent protein translocase protein TatA (76 aa).

Residues 1-21 (MGGISITQLLIIVAIVVLLFG) form a helical membrane-spanning segment. The segment at 45-76 (DDNKEKDAEFKSLSDDSETTAKTEKAKDKEQA) is disordered.

This sequence belongs to the TatA/E family. In terms of assembly, the Tat system comprises two distinct complexes: a TatABC complex, containing multiple copies of TatA, TatB and TatC subunits, and a separate TatA complex, containing only TatA subunits. Substrates initially bind to the TatABC complex, which probably triggers association of the separate TatA complex to form the active translocon.

Its subcellular location is the cell inner membrane. Functionally, part of the twin-arginine translocation (Tat) system that transports large folded proteins containing a characteristic twin-arginine motif in their signal peptide across membranes. TatA could form the protein-conducting channel of the Tat system. This is Sec-independent protein translocase protein TatA from Pasteurella multocida (strain Pm70).